Here is a 291-residue protein sequence, read N- to C-terminus: uncharacterized protein (291 aa).

This sequence to E.cuniculi ECU03_0120.

This is an uncharacterized protein from Encephalitozoon cuniculi (strain GB-M1) (Microsporidian parasite).